The chain runs to 429 residues: UDP-N-acetylglucosamine 1-carboxyvinyltransferase (429 aa).

A phosphoenolpyruvate-binding site is contributed by 22-23; it reads KN. R102 provides a ligand contact to UDP-N-acetyl-alpha-D-glucosamine. C126 acts as the Proton donor in catalysis. C126 carries the post-translational modification 2-(S-cysteinyl)pyruvic acid O-phosphothioketal. UDP-N-acetyl-alpha-D-glucosamine contacts are provided by residues 131–135, D316, and I338; that span reads RPVDL.

Belongs to the EPSP synthase family. MurA subfamily.

The protein resides in the cytoplasm. The catalysed reaction is phosphoenolpyruvate + UDP-N-acetyl-alpha-D-glucosamine = UDP-N-acetyl-3-O-(1-carboxyvinyl)-alpha-D-glucosamine + phosphate. It participates in cell wall biogenesis; peptidoglycan biosynthesis. Its function is as follows. Cell wall formation. Adds enolpyruvyl to UDP-N-acetylglucosamine. In Methylorubrum extorquens (strain CM4 / NCIMB 13688) (Methylobacterium extorquens), this protein is UDP-N-acetylglucosamine 1-carboxyvinyltransferase.